We begin with the raw amino-acid sequence, 248 residues long: UPF0736 protein BCB4264_A1231 (248 aa).

The protein belongs to the UPF0736 family.

The chain is UPF0736 protein BCB4264_A1231 from Bacillus cereus (strain B4264).